The sequence spans 196 residues: ATP-dependent Clp protease proteolytic subunit (196 aa).

Catalysis depends on S98, which acts as the Nucleophile. Residue H123 is part of the active site.

Belongs to the peptidase S14 family. As to quaternary structure, fourteen ClpP subunits assemble into 2 heptameric rings which stack back to back to give a disk-like structure with a central cavity, resembling the structure of eukaryotic proteasomes.

It localises to the cytoplasm. The catalysed reaction is Hydrolysis of proteins to small peptides in the presence of ATP and magnesium. alpha-casein is the usual test substrate. In the absence of ATP, only oligopeptides shorter than five residues are hydrolyzed (such as succinyl-Leu-Tyr-|-NHMec, and Leu-Tyr-Leu-|-Tyr-Trp, in which cleavage of the -Tyr-|-Leu- and -Tyr-|-Trp bonds also occurs).. Functionally, cleaves peptides in various proteins in a process that requires ATP hydrolysis. Has a chymotrypsin-like activity. Plays a major role in the degradation of misfolded proteins. The chain is ATP-dependent Clp protease proteolytic subunit from Actinobacillus pleuropneumoniae serotype 7 (strain AP76).